Here is a 463-residue protein sequence, read N- to C-terminus: Cysteine--tRNA ligase (463 aa).

Position 29 (Cys29) interacts with Zn(2+). Positions 31 to 41 (PTVYDFAHIGN) match the 'HIGH' region motif. Zn(2+) is bound by residues Cys227, His252, and Glu256. Positions 285-289 (KMSKS) match the 'KMSKS' region motif. Position 288 (Lys288) interacts with ATP.

The protein belongs to the class-I aminoacyl-tRNA synthetase family. In terms of assembly, monomer. Requires Zn(2+) as cofactor.

Its subcellular location is the cytoplasm. It catalyses the reaction tRNA(Cys) + L-cysteine + ATP = L-cysteinyl-tRNA(Cys) + AMP + diphosphate. This chain is Cysteine--tRNA ligase, found in Rhodopseudomonas palustris (strain BisA53).